We begin with the raw amino-acid sequence, 2128 residues long: Spectrin beta chain, erythrocytic (2128 aa).

Positions 1–15 (MTSATEFENVGNQPP) are enriched in polar residues. The interval 1–30 (MTSATEFENVGNQPPFSRINARWDAPDDEL) is disordered. The actin-binding stretch occupies residues 2–275 (TSATEFENVG…IITYVVAFYH (274 aa)). Ser36 is subject to Phosphoserine. Calponin-homology (CH) domains lie at 54 to 158 (VVQK…LRFQ) and 173 to 278 (RSAK…HYFS). Thr104 is modified (phosphothreonine). Spectrin repeat units lie at residues 303–411 (MIEK…LALR), 416–517 (RQEF…QRLE), 521–627 (ALQK…QLEQ), 630–733 (RLWK…DLQD), 736–838 (NFFQ…KLQE), 845–942 (VFGE…REAV), 950–1050 (NYCV…LSLG), 1054–1157 (KLQA…NTLT), 1162–1250 (FQEF…RHKK), 1267–1368 (ELQN…EQLS), 1381–1455 (ADLN…FLDL), 1473–1574 (LQIS…RLRD), 1576–1680 (HEAQ…RLEN), 1682–1784 (YHLF…MQLL), 1789–1890 (DLHR…RAQL), 1897–1997 (FRFF…DRLH), and 2004–2064 (QFSR…KPTT). Ser1289 is subject to Phosphoserine. The residue at position 2034 (Ser2034) is a Phosphoserine. The interval 2062–2108 (PTTLELKERQTPERPTEEPGPQEEEGETAGEAPQVHHAATERTSPVS) is disordered. Residues Thr2064, Thr2072, and Thr2101 each carry the phosphothreonine modification. Residues 2066–2078 (ELKERQTPERPTE) are compositionally biased toward basic and acidic residues. Ser2105, Ser2108, Ser2114, Ser2116, and Ser2119 each carry phosphoserine.

The protein belongs to the spectrin family. Composed of nonhomologous chains, alpha and beta, which aggregate to form dimers, tetramers, and higher polymers. Interacts with BCAM.

Its subcellular location is the cytoplasm. It localises to the cytoskeleton. It is found in the cell cortex. Spectrin is the major constituent of the cytoskeletal network underlying the erythrocyte plasma membrane. It associates with band 4.1 and actin to form the cytoskeletal superstructure of the erythrocyte plasma membrane. This is Spectrin beta chain, erythrocytic (Sptb) from Mus musculus (Mouse).